The primary structure comprises 345 residues: UDP-N-acetylenolpyruvoylglucosamine reductase (345 aa).

One can recognise an FAD-binding PCMH-type domain in the interval 15–218; it reads VDVYAEKVII…NTIIFLRYKK (204 aa). The active site involves Arg-161. Ser-230 serves as the catalytic Proton donor. Glu-327 is a catalytic residue.

The protein belongs to the MurB family. Requires FAD as cofactor.

It is found in the cytoplasm. The enzyme catalyses UDP-N-acetyl-alpha-D-muramate + NADP(+) = UDP-N-acetyl-3-O-(1-carboxyvinyl)-alpha-D-glucosamine + NADPH + H(+). Its pathway is cell wall biogenesis; peptidoglycan biosynthesis. Cell wall formation. This Blochmanniella floridana protein is UDP-N-acetylenolpyruvoylglucosamine reductase.